The chain runs to 232 residues: MKVYKLVLMRHGESIWNELNKFTGWHDVDLSNRGVQESLKAAKLLKKHGFYFDYAYSSVLKRSIHTLWNIIKFLDQSWIPVKKSWRLNERHYGALEGLNKDDVIQKYGNDKVQQWRRSFNIAPPKISYLEKKKLAHDSRYNNINFDILPYCESLKLTTQRVLPYWLNEIFPRFQKNTKIIIVAHGNSLRALIKYLNNINDIDILNLNIATGFPIIYEFNSEFKPIQYYYLKQ.

Substrate is bound by residues 10–17, 23–24, R62, 89–92, K100, 116–117, and 185–186; these read RHGESIWN, TG, ERHY, RR, and GN. H11 functions as the Tele-phosphohistidine intermediate in the catalytic mechanism. E89 acts as the Proton donor/acceptor in catalysis.

This sequence belongs to the phosphoglycerate mutase family. BPG-dependent PGAM subfamily. As to quaternary structure, homodimer.

It carries out the reaction (2R)-2-phosphoglycerate = (2R)-3-phosphoglycerate. Its pathway is carbohydrate degradation; glycolysis; pyruvate from D-glyceraldehyde 3-phosphate: step 3/5. Functionally, catalyzes the interconversion of 2-phosphoglycerate and 3-phosphoglycerate. The protein is 2,3-bisphosphoglycerate-dependent phosphoglycerate mutase of Buchnera aphidicola subsp. Baizongia pistaciae (strain Bp).